Consider the following 22-residue polypeptide: XSGKVLSEEEKAAANVYIKKME.

In terms of assembly, complex I is composed of about 45 different subunits.

Its subcellular location is the mitochondrion inner membrane. It carries out the reaction a ubiquinone + NADH + 5 H(+)(in) = a ubiquinol + NAD(+) + 4 H(+)(out). Transfer of electrons from NADH to the respiratory chain. The immediate electron acceptor for the enzyme is believed to be ubiquinone. This chain is NADH-ubiquinone oxidoreductase 16 kDa subunit, found in Solanum tuberosum (Potato).